The chain runs to 225 residues: 3-dehydroquinate dehydratase (225 aa).

Residues S6, 30–32 (EWR), and R62 contribute to the 3-dehydroquinate site. The Proton donor/acceptor role is filled by H118. The Schiff-base intermediate with substrate role is filled by K143. 3-dehydroquinate contacts are provided by R186, S205, and Q209.

This sequence belongs to the type-I 3-dehydroquinase family. As to quaternary structure, homodimer.

The catalysed reaction is 3-dehydroquinate = 3-dehydroshikimate + H2O. The protein operates within metabolic intermediate biosynthesis; chorismate biosynthesis; chorismate from D-erythrose 4-phosphate and phosphoenolpyruvate: step 3/7. Functionally, involved in the third step of the chorismate pathway, which leads to the biosynthesis of aromatic amino acids. Catalyzes the cis-dehydration of 3-dehydroquinate (DHQ) and introduces the first double bond of the aromatic ring to yield 3-dehydroshikimate. This chain is 3-dehydroquinate dehydratase, found in Streptococcus pneumoniae (strain Hungary19A-6).